Here is a 270-residue protein sequence, read N- to C-terminus: ATP synthase subunit a (270 aa).

7 helical membrane-spanning segments follow: residues 29–49 (VDTFSISLVLGFLFAAVFAMV), 87–107 (IAPLALTIFCWVFLMNFMDLF), 108–128 (PVDLFPMAAQWIGYTFFGLEP), 140–160 (DVNATFAMSLSVLILIVGFSI), 182–202 (PVGAIILAPLNFAFQLVELAA), 220–240 (LIFILIALLPWGLQWVLGAPW), and 241–261 (AIFHILIITLQAFVFMMLTIV).

This sequence belongs to the ATPase A chain family. In terms of assembly, F-type ATPases have 2 components, CF(1) - the catalytic core - and CF(0) - the membrane proton channel. CF(1) has five subunits: alpha(3), beta(3), gamma(1), delta(1), epsilon(1). CF(0) has three main subunits: a(1), b(2) and c(9-12). The alpha and beta chains form an alternating ring which encloses part of the gamma chain. CF(1) is attached to CF(0) by a central stalk formed by the gamma and epsilon chains, while a peripheral stalk is formed by the delta and b chains.

It is found in the cell inner membrane. In terms of biological role, key component of the proton channel; it plays a direct role in the translocation of protons across the membrane. The polypeptide is ATP synthase subunit a (Chromobacterium violaceum (strain ATCC 12472 / DSM 30191 / JCM 1249 / CCUG 213 / NBRC 12614 / NCIMB 9131 / NCTC 9757 / MK)).